Reading from the N-terminus, the 804-residue chain is DNA gyrase subunit B (804 aa).

A Toprim domain is found at 431 to 546; the sequence is CEMYIVEGDS…NGCVYIAQPP (116 aa). Mg(2+)-binding residues include Glu437, Asp511, and Asp513.

Belongs to the type II topoisomerase GyrB family. As to quaternary structure, heterotetramer, composed of two GyrA and two GyrB chains. In the heterotetramer, GyrA contains the active site tyrosine that forms a transient covalent intermediate with DNA, while GyrB binds cofactors and catalyzes ATP hydrolysis. Mg(2+) is required as a cofactor. Mn(2+) serves as cofactor. The cofactor is Ca(2+).

The protein localises to the cytoplasm. The catalysed reaction is ATP-dependent breakage, passage and rejoining of double-stranded DNA.. Its function is as follows. A type II topoisomerase that negatively supercoils closed circular double-stranded (ds) DNA in an ATP-dependent manner to modulate DNA topology and maintain chromosomes in an underwound state. Negative supercoiling favors strand separation, and DNA replication, transcription, recombination and repair, all of which involve strand separation. Also able to catalyze the interconversion of other topological isomers of dsDNA rings, including catenanes and knotted rings. Type II topoisomerases break and join 2 DNA strands simultaneously in an ATP-dependent manner. The sequence is that of DNA gyrase subunit B from Chlamydia muridarum (strain MoPn / Nigg).